The primary structure comprises 584 residues: ETHYLENE INSENSITIVE 3-like 1 protein (584 aa).

The stretch at 41–74 (YTDDEMDVDELEKRMWRDKMRLKRLKEQQSKCKE) forms a coiled coil. Positions 67–80 (EQQSKCKEGVDGSK) are enriched in basic and acidic residues. 2 disordered regions span residues 67-93 (EQQS…RKKM) and 565-584 (EGMG…SIWF).

It belongs to the EIN3 family. In terms of assembly, acts as a homodimer to bind the primary ethylene response element.

The protein localises to the nucleus. Probable transcription factor acting as a positive regulator in the ethylene response pathway. Could bind the primary ethylene response element present in the ETHYLENE-RESPONSE-FACTOR1 promoter. The protein is ETHYLENE INSENSITIVE 3-like 1 protein (EIL1) of Arabidopsis thaliana (Mouse-ear cress).